The chain runs to 426 residues: Serine--tRNA ligase (426 aa).

231–233 lines the L-serine pocket; the sequence is TAE. 262–264 contacts ATP; sequence RSE. Glu285 serves as a coordination point for L-serine. An ATP-binding site is contributed by 349–352; it reads EISS. Residue Ser385 participates in L-serine binding.

This sequence belongs to the class-II aminoacyl-tRNA synthetase family. Type-1 seryl-tRNA synthetase subfamily. Homodimer. The tRNA molecule binds across the dimer.

It localises to the cytoplasm. It catalyses the reaction tRNA(Ser) + L-serine + ATP = L-seryl-tRNA(Ser) + AMP + diphosphate + H(+). The catalysed reaction is tRNA(Sec) + L-serine + ATP = L-seryl-tRNA(Sec) + AMP + diphosphate + H(+). It participates in aminoacyl-tRNA biosynthesis; selenocysteinyl-tRNA(Sec) biosynthesis; L-seryl-tRNA(Sec) from L-serine and tRNA(Sec): step 1/1. Its function is as follows. Catalyzes the attachment of serine to tRNA(Ser). Is also able to aminoacylate tRNA(Sec) with serine, to form the misacylated tRNA L-seryl-tRNA(Sec), which will be further converted into selenocysteinyl-tRNA(Sec). The protein is Serine--tRNA ligase of Teredinibacter turnerae (strain ATCC 39867 / T7901).